The sequence spans 386 residues: Na(+)/H(+) antiporter NhaA (386 aa).

Helical transmembrane passes span 10–30 (MGSA…IFAN), 58–78 (LLHW…GLEV), 94–114 (IFPA…YYLI), 124–144 (GWAI…ALLG), 154–174 (FLLA…AVFF), 176–196 (EELS…LITL), 199–219 (MKVG…AAVL), 253–273 (ILTP…NAGV), 283–303 (IFST…PLGV), 327–347 (VFAI…LAGL), and 361–381 (LSRL…YLLL).

This sequence belongs to the NhaA Na(+)/H(+) (TC 2.A.33) antiporter family.

It localises to the cell inner membrane. The enzyme catalyses Na(+)(in) + 2 H(+)(out) = Na(+)(out) + 2 H(+)(in). In terms of biological role, na(+)/H(+) antiporter that extrudes sodium in exchange for external protons. The protein is Na(+)/H(+) antiporter NhaA of Mannheimia succiniciproducens (strain KCTC 0769BP / MBEL55E).